Consider the following 1216-residue polypeptide: RAB11-binding protein RELCH (1216 aa).

Residues 1 to 13 (MAAMAPGGGGSGS) show a composition bias toward gly residues. 2 disordered regions span residues 1–67 (MAAM…GSSA) and 133–179 (NPGN…NRAG). Position 2 is an N-acetylalanine (Ala2). Phosphoserine is present on residues Ser20 and Ser22. The segment covering 21-31 (DSDEDDDEVAA) has biased composition (acidic residues). Thr32 carries the post-translational modification Phosphothreonine. A phosphoserine mark is found at Ser54 and Ser56. Over residues 142–154 (GTPPGMGAPGIPG) the composition is skewed to low complexity. A phosphoserine mark is found at Ser180 and Ser182. Thr183 is subject to Phosphothreonine. Ser186 carries the post-translational modification Phosphoserine. Residues 197–231 (NRETDERVAVLEFELRKAKETIQALRANLTKAAEH) adopt a coiled-coil conformation. The LisH domain occupies 255-287 (EKRALNFLVNEFLLKNNYKLTSITFSDENDDQD). The stretch at 358 to 397 (LVQKLEDKISLLNNEKWSLMEQIRRLESEMDILKAEHFAT) forms a coiled coil. Ser385 carries the post-translational modification Phosphoserine. The disordered stretch occupies residues 409-473 (VWSSQKDSED…ELPPSSVSNK (65 aa)). The span at 429-440 (DQEKTKDVHLEI) shows a compositional bias: basic and acidic residues. Ser453 is subject to Phosphoserine. Residues 497–779 (CRMSADSRLG…SSKAKLHGEV (283 aa)) form an interaction with RAB11A and RAB11B region. HEAT repeat units lie at residues 601-639 (LLPQCWEQINHKYPERRLLVAESCGALAPYLPKEIRSSL) and 640-679 (VLSMLQQMLMEDKADLVREAVIKSLGIIMGYIDDPDKYQQ). Ser792 is subject to Phosphoserine. The stretch at 1004-1042 (VVPALITLSSDPEISVRIATIPAFGTIMETVIQRELLER) is one HEAT 3 repeat. Phosphoserine is present on Ser1149.

Interacts with RAB11A (VIA-GTP form). Interacts with RAB11B. Interacts (via the third HEAT repeat) with OSBP (via C-terminus). Found in a complex composed of RELCH, OSBP1 and RAB11A.

Its subcellular location is the recycling endosome. The protein localises to the golgi apparatus. It is found in the trans-Golgi network. In terms of biological role, regulates intracellular cholesterol distribution from recycling endosomes to the trans-Golgi network through interactions with RAB11 and OSBP. Functions in membrane tethering and promotes OSBP-mediated cholesterol transfer between RAB11-bound recycling endosomes and OSBP-bound Golgi-like membranes. In Mus musculus (Mouse), this protein is RAB11-binding protein RELCH (Relch).